The primary structure comprises 529 residues: Protein PAT1 homolog 2 (529 aa).

Residues Gln153–Ala183 form a disordered region.

Belongs to the PAT1 family. Interacts with LSM1.

The protein localises to the cytoplasm. It localises to the nucleus. Its function is as follows. RNA-binding protein that acts as a translational repressor. In Mus musculus (Mouse), this protein is Protein PAT1 homolog 2 (Patl2).